Here is a 122-residue protein sequence, read N- to C-terminus: Large ribosomal subunit protein bL17 (122 aa).

It belongs to the bacterial ribosomal protein bL17 family. As to quaternary structure, part of the 50S ribosomal subunit. Contacts protein L32.

In Neisseria meningitidis serogroup C / serotype 2a (strain ATCC 700532 / DSM 15464 / FAM18), this protein is Large ribosomal subunit protein bL17.